Consider the following 314-residue polypeptide: MPATRPVLLIGGPTAGGKSALALDLAGRLSGTVVNADSMQLYDGLRVLTARPSVAEEARVPHRLYGIVPPSERMSAARWRDLALAEIAAAHDAGRVPVVVGGTGLYLRALAEGLADIPPVPEPVRAEAQALHRALGTPALHARLAAEDPDGAARLHPGDTTRVLRAWEVLRATGRPLGYWQTAGRAAPPPGLRFLTLVCEPPRDRLYAACDARFLRMLEAGALEEVRRLAALGLDPGLPAMKALGVPELLAHLRGDLPLEAATATAQQATRNYAKRQLTWFRHQIAAARRFDPGDCVERNAVMKFCVDNVTQIS.

12–19 (GPTAGGKS) provides a ligand contact to ATP. 14–19 (TAGGKS) is a substrate binding site. The interval 37-40 (DSMQ) is interaction with substrate tRNA.

Belongs to the IPP transferase family. As to quaternary structure, monomer. The cofactor is Mg(2+).

The enzyme catalyses adenosine(37) in tRNA + dimethylallyl diphosphate = N(6)-dimethylallyladenosine(37) in tRNA + diphosphate. Catalyzes the transfer of a dimethylallyl group onto the adenine at position 37 in tRNAs that read codons beginning with uridine, leading to the formation of N6-(dimethylallyl)adenosine (i(6)A). The chain is tRNA dimethylallyltransferase from Rhodospirillum centenum (strain ATCC 51521 / SW).